The primary structure comprises 328 residues: L-lactate dehydrogenase (328 aa).

NAD(+)-binding positions include Val18, Glu39, Lys46, Tyr71, and 85–86 (GA). The substrate site is built by Gln88 and Arg94. NAD(+) is bound by residues Ser107, 124 to 126 (AAN), and Ser149. 126–129 (NPVD) contributes to the substrate binding site. 154 to 157 (DTAR) is a binding site for substrate. Beta-D-fructose 1,6-bisphosphate contacts are provided by Arg159 and His174. His181 serves as the catalytic Proton acceptor. Position 226 is a phosphotyrosine (Tyr226). A substrate-binding site is contributed by Thr235.

The protein belongs to the LDH/MDH superfamily. LDH family. Homotetramer.

Its subcellular location is the cytoplasm. The catalysed reaction is (S)-lactate + NAD(+) = pyruvate + NADH + H(+). It functions in the pathway fermentation; pyruvate fermentation to lactate; (S)-lactate from pyruvate: step 1/1. Its activity is regulated as follows. Allosterically activated by fructose 1,6-bisphosphate (FBP). In terms of biological role, catalyzes the conversion of lactate to pyruvate. The protein is L-lactate dehydrogenase of Streptococcus mutans serotype c (strain ATCC 700610 / UA159).